The chain runs to 517 residues: Variant surface glycoprotein MVAT5 (517 aa).

The N-terminal stretch at 1–21 is a signal peptide; sequence MIGKAFIILSLLNELPTPTAA. 2 cysteine pairs are disulfide-bonded: C417-C430 and C426-C443. An N-linked (GlcNAc...) asparagine glycan is attached at N435. The span at 454–470 shows a compositional bias: low complexity; it reads QAAQTAGAGEGAAGTTT. The interval 454 to 487 is disordered; the sequence is QAAQTAGAGEGAAGTTTDKCKDKKKDDCKSPDCK. A compositionally biased stretch (basic and acidic residues) spans 471-487; sequence DKCKDKKKDDCKSPDCK. A lipid anchor (GPI-anchor amidated aspartate) is attached at D495. The propeptide at 496 to 517 is removed in mature form; that stretch reads SSILLNKQFALMVSAAFVALLF.

The protein localises to the cell membrane. Its function is as follows. VSG forms a coat on the surface of the parasite. The trypanosome evades the immune response of the host by expressing a series of antigenically distinct VSGs from an estimated 1000 VSG genes. The protein is Variant surface glycoprotein MVAT5 of Trypanosoma brucei rhodesiense.